A 220-amino-acid polypeptide reads, in one-letter code: 7-cyano-7-deazaguanine synthase (220 aa).

Residue 7 to 17 participates in ATP binding; sequence LSGGMDSSTLA. Cys187, Cys195, Cys198, and Cys201 together coordinate Zn(2+).

Belongs to the QueC family. Zn(2+) serves as cofactor.

The catalysed reaction is 7-carboxy-7-deazaguanine + NH4(+) + ATP = 7-cyano-7-deazaguanine + ADP + phosphate + H2O + H(+). It functions in the pathway purine metabolism; 7-cyano-7-deazaguanine biosynthesis. Catalyzes the ATP-dependent conversion of 7-carboxy-7-deazaguanine (CDG) to 7-cyano-7-deazaguanine (preQ(0)). The protein is 7-cyano-7-deazaguanine synthase of Methanospirillum hungatei JF-1 (strain ATCC 27890 / DSM 864 / NBRC 100397 / JF-1).